Here is a 402-residue protein sequence, read N- to C-terminus: Phosphoglycerate kinase (402 aa).

Substrate-binding positions include 24–26 (DFN), Arg-40, 63–66 (HFGR), Arg-122, and Arg-155. ATP-binding positions include Lys-206, Gly-297, Glu-328, and 357 to 360 (GGDS).

This sequence belongs to the phosphoglycerate kinase family. In terms of assembly, monomer.

The protein localises to the cytoplasm. The enzyme catalyses (2R)-3-phosphoglycerate + ATP = (2R)-3-phospho-glyceroyl phosphate + ADP. It participates in carbohydrate degradation; glycolysis; pyruvate from D-glyceraldehyde 3-phosphate: step 2/5. This chain is Phosphoglycerate kinase, found in Prochlorococcus marinus (strain MIT 9211).